The sequence spans 109 residues: Nucleoid-associated protein SG0690 (109 aa).

The segment at 1 to 23 is disordered; sequence MFGKGGMGNLMKQAQQMQEKMQR.

Belongs to the YbaB/EbfC family. Homodimer.

Its subcellular location is the cytoplasm. The protein localises to the nucleoid. Its function is as follows. Binds to DNA and alters its conformation. May be involved in regulation of gene expression, nucleoid organization and DNA protection. This chain is Nucleoid-associated protein SG0690, found in Sodalis glossinidius (strain morsitans).